A 185-amino-acid chain; its full sequence is Large ribosomal subunit protein bL25 (185 aa).

This sequence belongs to the bacterial ribosomal protein bL25 family. CTC subfamily. As to quaternary structure, part of the 50S ribosomal subunit; part of the 5S rRNA/L5/L18/L25 subcomplex. Contacts the 5S rRNA. Binds to the 5S rRNA independently of L5 and L18.

Its function is as follows. This is one of the proteins that binds to the 5S RNA in the ribosome where it forms part of the central protuberance. This is Large ribosomal subunit protein bL25 from Chlamydia pneumoniae (Chlamydophila pneumoniae).